The sequence spans 526 residues: Outer capsid protein VP5 (526 aa).

An involved in membrane permeabilization region spans residues 1–42 (MGKIIKSLSRFGKKVGNALTSNTAKKIYSTIGKAAERFAESE).

The protein belongs to the orbivirus VP5 family.

It localises to the virion. Its function is as follows. VP5 protein is one of the two proteins (with VP2) which constitute the virus particle outer capsid. Acts as a membrane permeabilization protein that mediates release of viral particles from endosomal compartments into the cytoplasm. Permeabilization activity is probably negatively regulated by VP2 and is triggered by endosomal degradation of VP2 and exposure to low pH. The protein is Outer capsid protein VP5 (Segment-6) of Antilocapra americana (Pronghorn).